Reading from the N-terminus, the 258-residue chain is Putative ankyrin repeat domain-containing protein 30B-like (258 aa).

The disordered stretch occupies residues 1 to 21 (MERLSAAPVKGQTGPERPSPF). ANK repeat units lie at residues 71-100 (KKRT…QLDV), 104-133 (ENRT…DPNI), 137-166 (YGNT…DIEV), and 170-199 (AGHT…NANA). The segment at 216–258 (KISKNSQNSNPEGTSEGTPDEAAPLAERTPDTAESLVERTPDE) is disordered. Residues 218–232 (SKNSQNSNPEGTSEG) are compositionally biased toward polar residues. A compositionally biased stretch (basic and acidic residues) spans 243–258 (RTPDTAESLVERTPDE).

This is Putative ankyrin repeat domain-containing protein 30B-like (ANKRD30BL) from Homo sapiens (Human).